Consider the following 242-residue polypeptide: Ubiquinone biosynthesis O-methyltransferase (242 aa).

Residues Arg-44, Gly-64, Asp-85, and Met-129 each coordinate S-adenosyl-L-methionine.

Belongs to the methyltransferase superfamily. UbiG/COQ3 family.

The catalysed reaction is a 3-demethylubiquinol + S-adenosyl-L-methionine = a ubiquinol + S-adenosyl-L-homocysteine + H(+). The enzyme catalyses a 3-(all-trans-polyprenyl)benzene-1,2-diol + S-adenosyl-L-methionine = a 2-methoxy-6-(all-trans-polyprenyl)phenol + S-adenosyl-L-homocysteine + H(+). It functions in the pathway cofactor biosynthesis; ubiquinone biosynthesis. In terms of biological role, O-methyltransferase that catalyzes the 2 O-methylation steps in the ubiquinone biosynthetic pathway. This Salmonella agona (strain SL483) protein is Ubiquinone biosynthesis O-methyltransferase.